A 142-amino-acid polypeptide reads, in one-letter code: Large ribosomal subunit protein uL13 (142 aa).

The protein belongs to the universal ribosomal protein uL13 family. As to quaternary structure, part of the 50S ribosomal subunit.

Its function is as follows. This protein is one of the early assembly proteins of the 50S ribosomal subunit, although it is not seen to bind rRNA by itself. It is important during the early stages of 50S assembly. This is Large ribosomal subunit protein uL13 from Vibrio atlanticus (strain LGP32) (Vibrio splendidus (strain Mel32)).